A 221-amino-acid chain; its full sequence is Protein lethal(2)k10201 (221 aa).

2 consecutive C2H2-type zinc fingers follow at residues 74 to 97 (YSCVECRKMLPTAHLLDLHITEQH) and 113 to 138 (FSCFLEECTIKFHTARQRKDHCIITH). A disordered region spans residues 146-168 (FDHSKNRGKQKHQGKSKPNSMEV). Basic residues predominate over residues 151-160 (NRGKQKHQGK).

In terms of biological role, vital for development. The chain is Protein lethal(2)k10201 (l(2)k10201) from Drosophila melanogaster (Fruit fly).